The primary structure comprises 522 residues: F-box only protein 7 (522 aa).

Positions Met1–Pro87 are ubiquitin-like. The segment covering Ser88–Val132 has biased composition (polar residues). The disordered stretch occupies residues Ser88–Pro151. Residues Val91–Thr128 form an important for interaction with PINK1 region. An important for interaction with CDK6 region spans residues Thr128–Met168. Residues Pro179–Leu323 are important for dimerization and interaction with PSMF1. Residues Val328–Leu374 form the F-box domain. Positions Arg380–Met522 are important for interaction with CDK6. Arg431 and Arg451 each carry omega-N-methylarginine. The RFDP motif motif lies at Arg481–Pro484. The segment at Pro484–Met522 is disordered. Arg518 is modified (asymmetric dimethylarginine).

In terms of assembly, part of the SCF (SKP1-CUL1-F-box) E3 ubiquitin-protein ligase complex SCF(FBXO7) formed of CUL1, SKP1, RBX1 and FBXO7. Interacts via its C-terminal proline-rich region with DLGAP5. Interacts with BIRC2. Interacts with CDK6 and promotes its interaction with D-type cyclin. Interacts (via the N-terminal Ubl domain) with PRKN. Interacts (via N-terminal region) with PINK1. Interacts with PSMF1.

It localises to the cytoplasm. Its subcellular location is the nucleus. It is found in the mitochondrion. The protein resides in the cytosol. It participates in protein modification; protein ubiquitination. Functionally, substrate recognition component of a SCF (SKP1-CUL1-F-box protein) E3 ubiquitin-protein ligase complex which mediates the ubiquitination and subsequent proteasomal degradation of target proteins and plays a role in several biological processes such as cell cycle, cell proliferation, or maintenance of chromosome stability. Recognizes and ubiquitinates BIRC2 and the cell cycle regulator DLGAP5. Plays a role downstream of PINK1 in the clearance of damaged mitochondria via selective autophagy (mitophagy) by targeting PRKN to dysfunctional depolarized mitochondria. Promotes MFN1 ubiquitination. Mediates the ubiquitination and proteasomal degradation of UXT isoform 2, thereby impairing the NF-kappa-B signaling pathway. Inhibits NF-kappa-B pathway also by promoting the ubiquitinatioin of TRAF2. Affects the assembly state and activity of the proteasome in the cells including neurons by ubiquitinating the proteasomal subunit PSMA2 via 'Lys-63'-linked polyubiquitin chains. Promotes 'Lys-48'-linked polyubiquitination SIRT7, leading to the hydrogen peroxide-induced cell death. The polypeptide is F-box only protein 7 (FBXO7) (Bos taurus (Bovine)).